Consider the following 39-residue polypeptide: Cytochrome b559 subunit beta (39 aa).

The helical transmembrane segment at 14–30 (WLTVHGLAVPTVSFLGS) threads the bilayer. Heme is bound at residue H18.

Belongs to the PsbE/PsbF family. Heterodimer of an alpha subunit and a beta subunit. PSII is composed of 1 copy each of membrane proteins PsbA, PsbB, PsbC, PsbD, PsbE, PsbF, PsbH, PsbI, PsbJ, PsbK, PsbL, PsbM, PsbT, PsbX, PsbY, PsbZ, Psb30/Ycf12, at least 3 peripheral proteins of the oxygen-evolving complex and a large number of cofactors. It forms dimeric complexes. It depends on heme b as a cofactor.

The protein resides in the plastid. Its subcellular location is the chloroplast thylakoid membrane. Functionally, this b-type cytochrome is tightly associated with the reaction center of photosystem II (PSII). PSII is a light-driven water:plastoquinone oxidoreductase that uses light energy to abstract electrons from H(2)O, generating O(2) and a proton gradient subsequently used for ATP formation. It consists of a core antenna complex that captures photons, and an electron transfer chain that converts photonic excitation into a charge separation. The protein is Cytochrome b559 subunit beta of Cucumis sativus (Cucumber).